Here is a 158-residue protein sequence, read N- to C-terminus: Ribonuclease H (158 aa).

Residues 1–142 enclose the RNase H type-1 domain; sequence MRKQVEIFTD…CDELARAAAM (142 aa). Residues Asp-10, Glu-48, Asp-70, and Asp-134 each coordinate Mg(2+).

The protein belongs to the RNase H family. Monomer. The cofactor is Mg(2+).

Its subcellular location is the cytoplasm. It catalyses the reaction Endonucleolytic cleavage to 5'-phosphomonoester.. Functionally, endonuclease that specifically degrades the RNA of RNA-DNA hybrids. In Cronobacter sakazakii (strain ATCC BAA-894) (Enterobacter sakazakii), this protein is Ribonuclease H.